Reading from the N-terminus, the 352-residue chain is Staphylococcal superantigen-like 3 (352 aa).

Positions methionine 1–alanine 30 are cleaved as a signal peptide. The tract at residues alanine 61–threonine 165 is disordered. The segment covering arginine 69–lysine 104 has biased composition (basic and acidic residues). The span at proline 114–proline 141 shows a compositional bias: low complexity. Residues glutamine 142–methionine 164 are compositionally biased toward polar residues. The tract at residues isoleucine 228–tyrosine 326 is sialyl Lewis X-binding.

The protein belongs to the staphylococcal/streptococcal toxin family. In terms of assembly, interacts with host TLR2 (via its extracellular domain).

The protein localises to the secreted. In terms of biological role, secreted protein that plays an essential role in immune innate response inhibition by interacting with and inhibiting host TLR2. In turn, bacteria recognition by immune cells is impaired and cytokine production is inhibited. Mechanistically, by interacting with TLR2, blocks ligand binding and thus inhibits activation. Second, by interacting with an already formed TLR2-lipopeptide complex, prevents TLR heterodimerization and downstream signaling. The interaction with host TLR2 does not involve sialyl Lewis X interactions. The chain is Staphylococcal superantigen-like 3 from Staphylococcus aureus (strain Newman).